The primary structure comprises 325 residues: Diadenosine 5',5'''-P1,P4-tetraphosphate phosphorylase 2 (325 aa).

Substrate-binding positions include Lys53, 92-93 (NK), Asn148, and 154-157 (GSSQ). His161 functions as the Nucleophile in the catalytic mechanism. Substrate-binding positions include Gln163, 277–279 (NST), Met284, and Lys288.

Belongs to the ATP adenylyltransferase family. As to quaternary structure, monomer. It depends on a divalent metal cation as a cofactor.

The protein resides in the cytoplasm. It localises to the nucleus. The enzyme catalyses ADP + ATP + H(+) = P(1),P(4)-bis(5'-adenosyl) tetraphosphate + phosphate. It carries out the reaction sulfate + ADP + H(+) = adenosine 5'-phosphosulfate + phosphate. Ap4A phosphorylase catalyzes the phosphorolytic degradation of bis(5'-adenosyl) tetraphosphate (Ap4A) into ADP and ATP. Can also use other Np4N' nucleotides (where N and N' stand for A,C,G or U) as substrates, but prefers A-containing substrates. Cannot catalyze the reverse reaction. Additionally, this enzyme can also catalyze the phosphorolytic degradation of adenosine 5'-phosphosulfate (AMPS) into ADP and sulfate, the reversible exchange reaction between inorganic phosphate and the beta-phosphate of a nucleoside diphosphate (NDP), and the synthesis of Ap4A from AMPS plus ATP. The sequence is that of Diadenosine 5',5'''-P1,P4-tetraphosphate phosphorylase 2 from Saccharomyces cerevisiae (strain ATCC 204508 / S288c) (Baker's yeast).